The chain runs to 214 residues: ATP phosphoribosyltransferase (214 aa).

This sequence belongs to the ATP phosphoribosyltransferase family. Short subfamily. Heteromultimer composed of HisG and HisZ subunits.

It is found in the cytoplasm. The catalysed reaction is 1-(5-phospho-beta-D-ribosyl)-ATP + diphosphate = 5-phospho-alpha-D-ribose 1-diphosphate + ATP. The protein operates within amino-acid biosynthesis; L-histidine biosynthesis; L-histidine from 5-phospho-alpha-D-ribose 1-diphosphate: step 1/9. Catalyzes the condensation of ATP and 5-phosphoribose 1-diphosphate to form N'-(5'-phosphoribosyl)-ATP (PR-ATP). Has a crucial role in the pathway because the rate of histidine biosynthesis seems to be controlled primarily by regulation of HisG enzymatic activity. This Marinomonas sp. (strain MWYL1) protein is ATP phosphoribosyltransferase.